The following is a 250-amino-acid chain: Putative (5-formylfuran-3-yl)methyl phosphate synthase (250 aa).

The Schiff-base intermediate with substrate role is filled by K29. Residue K87 is the Proton acceptor of the active site.

The protein belongs to the MfnB family.

It catalyses the reaction 2 D-glyceraldehyde 3-phosphate = 4-(hydroxymethyl)-2-furancarboxaldehyde phosphate + phosphate + 2 H2O. In terms of biological role, catalyzes the formation of 4-(hydroxymethyl)-2-furancarboxaldehyde phosphate (4-HFC-P) from two molecules of glyceraldehyde-3-P (GA-3-P). This is Putative (5-formylfuran-3-yl)methyl phosphate synthase from Streptomyces griseus subsp. griseus (strain JCM 4626 / CBS 651.72 / NBRC 13350 / KCC S-0626 / ISP 5235).